Reading from the N-terminus, the 195-residue chain is Neurensin-1 (195 aa).

The next 2 membrane-spanning stretches (helical) occupy residues 66–86 (LISGTVFVILGLTVLAVGFLV) and 120–140 (AVLFCIGGTSMAGCLLMSVFV).

It belongs to the VMP family. In terms of tissue distribution, expressed in brain. Not detectable in other tissues tested.

The protein resides in the membrane. The protein localises to the cell projection. It localises to the neuron projection. In terms of biological role, may play an important role in neural organelle transport, and in transduction of nerve signals or in nerve growth. May play a role in neurite extension. May play a role in memory consolidation. The polypeptide is Neurensin-1 (Homo sapiens (Human)).